The primary structure comprises 376 residues: Histidinol-phosphate aminotransferase (376 aa).

The segment at 1–21 (MQPRDLSAHEPYVPGRGTKEV) is disordered. Lys222 carries the post-translational modification N6-(pyridoxal phosphate)lysine.

The protein belongs to the class-II pyridoxal-phosphate-dependent aminotransferase family. Histidinol-phosphate aminotransferase subfamily. It depends on pyridoxal 5'-phosphate as a cofactor.

It carries out the reaction L-histidinol phosphate + 2-oxoglutarate = 3-(imidazol-4-yl)-2-oxopropyl phosphate + L-glutamate. It participates in amino-acid biosynthesis; L-histidine biosynthesis; L-histidine from 5-phospho-alpha-D-ribose 1-diphosphate: step 7/9. The chain is Histidinol-phosphate aminotransferase from Haloquadratum walsbyi (strain DSM 16790 / HBSQ001).